We begin with the raw amino-acid sequence, 524 residues long: Solute carrier family 2, facilitated glucose transporter member 2 (524 aa).

Residues 1–6 (MTEDKI) lie on the Cytoplasmic side of the membrane. A helical membrane pass occupies residues 7–26 (TGTLVFAVLTAVLGSFQFGY). Residues 27-89 (DIGVINAPQQ…SWAEEETTAS (63 aa)) are Extracellular-facing. N-linked (GlcNAc...) asparagine glycosylation is present at Asn62. Residues 90–115 (ASLIIMLWSLSVSIFAIGGMIASFFG) form a helical membrane-spanning segment. Residues 116–126 (GMLGDRLGRIK) lie on the Cytoplasmic side of the membrane. A helical transmembrane segment spans residues 127 to 145 (AMLVANILSLVGALLMWFS). Over 146 to 150 (KLGPS) the chain is Extracellular. The helical transmembrane segment at 151-176 (HILIISGRGISGLYCGLISGLVPMYI) threads the bilayer. At 177 to 187 (GEIAPTKFRGA) the chain is on the cytoplasmic side. A helical transmembrane segment spans residues 188–211 (IGALHQLAIVTGILVSQIIGLDFL). Gln193 contributes to the D-glucose binding site. Residues 212 to 216 (LGNHE) are Extracellular-facing. Residues 217-239 (LWHILLGLSAVPAVLQSLMLFFC) traverse the membrane as a helical segment. Residues 240–303 (PESPRYLYIK…LFTNSSYRQP (64 aa)) are Cytoplasmic-facing. A helical membrane pass occupies residues 304–327 (ILVALMLHMAQQFSGINGIFYYST). D-glucose contacts are provided by residues 314–315 (QQ) and Asn320. The Extracellular segment spans residues 328 to 338 (SIFQTAGISQP). A helical transmembrane segment spans residues 339–360 (VYATIGVGAINTIFTALSVFLV). D-glucose is bound at residue Asn349. Residues 361–366 (EKAGRR) lie on the Cytoplasmic side of the membrane. A helical membrane pass occupies residues 367–389 (SLFLIGMSGMFVCAIFMSVGLVL). Topologically, residues 390–394 (LDKLP) are extracellular. Residues 395–413 (WMSYVSMTAIFLFVSFFEI) traverse the membrane as a helical segment. Residues Glu412 and Trp420 each contribute to the D-glucose site. Residues 414–433 (GPGPIPWFMVAEFFSQGPRP) lie on the Cytoplasmic side of the membrane. Residues 434-458 (AALAMAAFSNWTCNFIIALCFQYIA) form a helical membrane-spanning segment. Residues 459–463 (DFCGP) are Extracellular-facing. A helical transmembrane segment spans residues 464-482 (YVFFLFAGVVLVFTLFTFF). Residues 483 to 524 (KVPETKGKSFEEIAAEFQKKSGSAQSPKAAVEMEFLGATETV) lie on the Cytoplasmic side of the membrane. Thr523 is subject to Phosphothreonine.

This sequence belongs to the major facilitator superfamily. Sugar transporter (TC 2.A.1.1) family. Glucose transporter subfamily. Post-translationally, N-glycosylated; required for stability and retention at the cell surface of pancreatic beta cells.

Its subcellular location is the cell membrane. It catalyses the reaction D-glucose(out) = D-glucose(in). The catalysed reaction is D-fructose(out) = D-fructose(in). The enzyme catalyses L-dehydroascorbate(out) = L-dehydroascorbate(in). It carries out the reaction D-galactose(in) = D-galactose(out). Its activity is regulated as follows. D-glucose and maltose competitively inhibit fructose transport. D-glucose, D-fructose and maltose inhibit deoxyglucose transport. In terms of biological role, facilitative hexose transporter that mediates the transport of glucose, fructose and galactose. Likely mediates the bidirectional transfer of glucose across the plasma membrane of hepatocytes and is responsible for uptake of glucose by the beta cells; may comprise part of the glucose-sensing mechanism of the beta cell. May also participate with the Na(+)/glucose cotransporter in the transcellular transport of glucose in the small intestine and kidney. Also able to mediate the transport of dehydroascorbate. This Sus scrofa (Pig) protein is Solute carrier family 2, facilitated glucose transporter member 2.